The primary structure comprises 162 residues: Ribonuclease H (162 aa).

Residues 1 to 141 form the RNase H type-1 domain; that stretch reads MKRIEIFTDG…ADALARAGMA (141 aa). Residues Asp9, Glu47, Asp69, and Asp133 each coordinate Mg(2+). Positions 139 to 162 are disordered; the sequence is GMAPFKKKKGGDTASSEEGSARRR.

It belongs to the RNase H family. Monomer. Requires Mg(2+) as cofactor.

It is found in the cytoplasm. It catalyses the reaction Endonucleolytic cleavage to 5'-phosphomonoester.. Endonuclease that specifically degrades the RNA of RNA-DNA hybrids. This is Ribonuclease H from Chelativorans sp. (strain BNC1).